Here is a 159-residue protein sequence, read N- to C-terminus: ATP synthase subunit b (159 aa).

Residues 2-22 (NISIPQIIAAILNFIILLLIV) traverse the membrane as a helical segment.

It belongs to the ATPase B chain family. In terms of assembly, F-type ATPases have 2 components, F(1) - the catalytic core - and F(0) - the membrane proton channel. F(1) has five subunits: alpha(3), beta(3), gamma(1), delta(1), epsilon(1). F(0) has three main subunits: a(1), b(2) and c(10-14). The alpha and beta chains form an alternating ring which encloses part of the gamma chain. F(1) is attached to F(0) by a central stalk formed by the gamma and epsilon chains, while a peripheral stalk is formed by the delta and b chains.

It localises to the cell membrane. Its function is as follows. F(1)F(0) ATP synthase produces ATP from ADP in the presence of a proton or sodium gradient. F-type ATPases consist of two structural domains, F(1) containing the extramembraneous catalytic core and F(0) containing the membrane proton channel, linked together by a central stalk and a peripheral stalk. During catalysis, ATP synthesis in the catalytic domain of F(1) is coupled via a rotary mechanism of the central stalk subunits to proton translocation. Functionally, component of the F(0) channel, it forms part of the peripheral stalk, linking F(1) to F(0). This is ATP synthase subunit b from Clostridium botulinum (strain ATCC 19397 / Type A).